A 301-amino-acid polypeptide reads, in one-letter code: D-alanine--D-alanine ligase (301 aa).

An ATP-grasp domain is found at 99-294; the sequence is KSVLEANGIR…FSELIDMIIQ (196 aa). ATP is bound at residue 126–181; sequence INELGYPVVVKPTHGGSSVATFIVKEEKEIENCVSEAFKWDSEVMIEKFIKGDEIT. Positions 248, 261, and 263 each coordinate Mg(2+).

The protein belongs to the D-alanine--D-alanine ligase family. It depends on Mg(2+) as a cofactor. Mn(2+) is required as a cofactor.

It localises to the cytoplasm. The enzyme catalyses 2 D-alanine + ATP = D-alanyl-D-alanine + ADP + phosphate + H(+). Its pathway is cell wall biogenesis; peptidoglycan biosynthesis. Its function is as follows. Cell wall formation. This is D-alanine--D-alanine ligase from Clostridium beijerinckii (strain ATCC 51743 / NCIMB 8052) (Clostridium acetobutylicum).